The following is a 422-amino-acid chain: Glutamate-1-semialdehyde 2,1-aminomutase (422 aa).

The residue at position 264 (K264) is an N6-(pyridoxal phosphate)lysine.

This sequence belongs to the class-III pyridoxal-phosphate-dependent aminotransferase family. HemL subfamily. As to quaternary structure, homodimer. Pyridoxal 5'-phosphate is required as a cofactor.

The protein localises to the cytoplasm. It catalyses the reaction (S)-4-amino-5-oxopentanoate = 5-aminolevulinate. The protein operates within porphyrin-containing compound metabolism; protoporphyrin-IX biosynthesis; 5-aminolevulinate from L-glutamyl-tRNA(Glu): step 2/2. In Clostridium acetobutylicum (strain ATCC 824 / DSM 792 / JCM 1419 / IAM 19013 / LMG 5710 / NBRC 13948 / NRRL B-527 / VKM B-1787 / 2291 / W), this protein is Glutamate-1-semialdehyde 2,1-aminomutase.